A 263-amino-acid polypeptide reads, in one-letter code: HTH-type transcriptional repressor NanR (263 aa).

Positions 30 to 98 (KKLSEMVEEE…NGERARVSRP (69 aa)) constitute an HTH gntR-type domain. The H-T-H motif DNA-binding region spans 58-77 (ERELMAFFNVGRPSVREALA).

The protein belongs to the NanR family.

Transcriptional repressor that controls expression of the genes required for the catabolism of sialic acids. This Salmonella bongori (strain ATCC 43975 / DSM 13772 / NCTC 12419) protein is HTH-type transcriptional repressor NanR.